A 1085-amino-acid polypeptide reads, in one-letter code: DNA mismatch repair protein MutS (1085 aa).

The interval 533–564 (DEDLFGEEEQNAPPVGSSNHAVGTQPSADDEA) is disordered. The span at 548–559 (GSSNHAVGTQPS) shows a compositional bias: polar residues. Residue 812-819 (GPNMSGKS) participates in ATP binding. Positions 997–1042 (ERRAPRSAPPTVPARGDDRRSAGRASSSGAGAARGEQGRTLPDGQL) are disordered. A compositionally biased stretch (low complexity) spans 1019–1031 (GRASSSGAGAARG).

It belongs to the DNA mismatch repair MutS family.

This protein is involved in the repair of mismatches in DNA. It is possible that it carries out the mismatch recognition step. This protein has a weak ATPase activity. This chain is DNA mismatch repair protein MutS, found in Roseiflexus sp. (strain RS-1).